The chain runs to 244 residues: Small ribosomal subunit protein uS2 (244 aa).

The protein belongs to the universal ribosomal protein uS2 family.

The sequence is that of Small ribosomal subunit protein uS2 from Buchnera aphidicola subsp. Schizaphis graminum (strain Sg).